Consider the following 224-residue polypeptide: MKPQDLKAPFFGEERKTQIKDDVLYIPEHYFKHGQFEMPSWEEFFGNNHPIFCELCSGNGDWVVAQANKNPNMNWIAVEKRFDRVRKIWSKMHNSQVRNLRIVCGEAQTFFRHYIQNEVIQRIVVNFPDPWPKSRHRKHRLFQYEFMNDIVRVLVDSGIIILATDDKNYLLQAIKIMQQRLLPKLEEPYYCKMLENYGDSWFERLWRSKGQEIFYTEFVKKVGI.

4 residues coordinate S-adenosyl-L-methionine: E54, E79, E106, and D129. D129 is a catalytic residue. Substrate-binding residues include K133 and D165.

It belongs to the class I-like SAM-binding methyltransferase superfamily. TrmB family.

It carries out the reaction guanosine(46) in tRNA + S-adenosyl-L-methionine = N(7)-methylguanosine(46) in tRNA + S-adenosyl-L-homocysteine. It participates in tRNA modification; N(7)-methylguanine-tRNA biosynthesis. Its function is as follows. Catalyzes the formation of N(7)-methylguanine at position 46 (m7G46) in tRNA. The protein is tRNA (guanine-N(7)-)-methyltransferase of Chlamydia abortus (strain DSM 27085 / S26/3) (Chlamydophila abortus).